The chain runs to 192 residues: Endoribonuclease YbeY (192 aa).

Zn(2+)-binding residues include H109, H113, and H119. The segment at 142 to 192 is disordered; sequence VGAALREGGPARAAETETSWTRSPTSTSTRSPSGSTARGTRARSSRAGSGR. Positions 159-180 are enriched in low complexity; it reads TSWTRSPTSTSTRSPSGSTARG.

This sequence belongs to the endoribonuclease YbeY family. Requires Zn(2+) as cofactor.

It is found in the cytoplasm. Functionally, single strand-specific metallo-endoribonuclease involved in late-stage 70S ribosome quality control and in maturation of the 3' terminus of the 16S rRNA. In Anaeromyxobacter sp. (strain Fw109-5), this protein is Endoribonuclease YbeY.